The sequence spans 22 residues: Hemoglobinase-like protein 2 (22 aa).

This sequence belongs to the peptidase C13 family.

The enzyme catalyses Hydrolysis of proteins and small molecule substrates at -Asn-|-Xaa- bonds.. The sequence is that of Hemoglobinase-like protein 2 from Fasciola hepatica (Liver fluke).